We begin with the raw amino-acid sequence, 212 residues long: Thymidylate kinase (212 aa).

10-17 provides a ligand contact to ATP; sequence GPDGAGKS.

It belongs to the thymidylate kinase family.

The catalysed reaction is dTMP + ATP = dTDP + ADP. Its function is as follows. Phosphorylation of dTMP to form dTDP in both de novo and salvage pathways of dTTP synthesis. The protein is Thymidylate kinase of Lactobacillus helveticus (strain DPC 4571).